The sequence spans 356 residues: MAMLFGFGQSAEIQIRLSNEDTRKIVKARGDDGNMHDHFLYYDGESVTGTVHVNLKKANHKFEHQGIRIEFIGQIEVYYDRGNQQDFISLTRELARPGDLTQNAQFPFEFNNVEKPFETYMGTNVKLRYFLRVTVIRRLTDLTKELDLVVHALSSYPDNDKSIKMEVGIEDCLHIEFEYNKNKYHLQDVIVGKIYFLLVRIKIKYMEIAILKTEVVGSGPNTFKESETVAKFEIMDGAPVRGESIPIRLFLAGYDLAPSMRDVGKKFSVKYFLNLVLVDEEDRRYFKQQEVTLWRKADKVMRRPGTEDDEEEKQTTSIPGTQKFTAPAPVEHPKPESPRSDPKSGSTSPDDNSDSS.

The segment at 301 to 356 (MRRPGTEDDEEEKQTTSIPGTQKFTAPAPVEHPKPESPRSDPKSGSTSPDDNSDSS) is disordered. Residues 315–324 (TTSIPGTQKF) show a composition bias toward polar residues. Positions 331-342 (EHPKPESPRSDP) are enriched in basic and acidic residues.

This sequence belongs to the VPS26 family.

In terms of biological role, may play a role in vesicular protein sorting, similar to the yeast retromer proteins. This chain is Vacuolar protein sorting-associated protein 26 (vps-26), found in Caenorhabditis elegans.